The primary structure comprises 118 residues: uncharacterized protein (118 aa).

Residues 1 to 49 form a disordered region; the sequence is MDYVGGSLKLKNVKKKPLKKKKKDSKKLAEKVQEHSSRDKSPLEENGVS. Basic residues predominate over residues 11-25; sequence KNVKKKPLKKKKKDS. Over residues 26-43 the composition is skewed to basic and acidic residues; it reads KKLAEKVQEHSSRDKSPL.

This is an uncharacterized protein from Schizosaccharomyces pombe (strain 972 / ATCC 24843) (Fission yeast).